Consider the following 450-residue polypeptide: Casein kinase 1-like protein 1 (450 aa).

Positions 9–278 (FRLGRKIGSG…LKRIFRDLFI (270 aa)) constitute a Protein kinase domain. Residues 15 to 23 (IGSGSFGEI) and K38 each bind ATP. The active-site Proton acceptor is the D128. The interval 311 to 450 (AVGTSAALPP…LQVSDEHHPH (140 aa)) is disordered. The segment covering 328–342 (YTGEEEGRPHMESSR) has biased composition (basic and acidic residues). A compositionally biased stretch (polar residues) spans 349 to 365 (LDNSGNISNQPTSSSAR). Over residues 371–382 (SSSLFAQSAGSS) the composition is skewed to low complexity.

Belongs to the protein kinase superfamily. CK1 Ser/Thr protein kinase family. Casein kinase I subfamily. In terms of assembly, monomer. In terms of processing, autophosphorylated. In terms of tissue distribution, expressed in flowers.

It is found in the cytoplasm. The protein resides in the cell junction. It localises to the plasmodesma. It carries out the reaction L-seryl-[protein] + ATP = O-phospho-L-seryl-[protein] + ADP + H(+). The catalysed reaction is L-threonyl-[protein] + ATP = O-phospho-L-threonyl-[protein] + ADP + H(+). Functionally, casein kinases are operationally defined by their preferential utilization of acidic proteins such as caseins as substrates. It can phosphorylate a large number of proteins. The protein is Casein kinase 1-like protein 1 of Arabidopsis thaliana (Mouse-ear cress).